The primary structure comprises 358 residues: Peptide chain release factor 1 (358 aa).

Position 233 is an N5-methylglutamine (Gln-233).

Belongs to the prokaryotic/mitochondrial release factor family. Post-translationally, methylated by PrmC. Methylation increases the termination efficiency of RF1.

The protein resides in the cytoplasm. Its function is as follows. Peptide chain release factor 1 directs the termination of translation in response to the peptide chain termination codons UAG and UAA. In Agathobacter rectalis (strain ATCC 33656 / DSM 3377 / JCM 17463 / KCTC 5835 / VPI 0990) (Eubacterium rectale), this protein is Peptide chain release factor 1.